The chain runs to 207 residues: Guanylate kinase (207 aa).

Residues 4-184 (GTLYIVSAPS…ALMDFKAIIR (181 aa)) form the Guanylate kinase-like domain. 11–18 (APSGAGKS) is an ATP binding site.

It belongs to the guanylate kinase family.

Its subcellular location is the cytoplasm. It catalyses the reaction GMP + ATP = GDP + ADP. The catalysed reaction is dZMP + ATP = dZDP + ADP. The protein operates within purine metabolism. Its function is as follows. Essential for recycling GMP and indirectly, cGMP. In terms of biological role, (Microbial infection) Catalyzes the phosphorylation of dZMP to dZDP, when the bacterium is infected by a phage that produces the substrate for the synthesis of dZTP (2- amino-2'-deoxyadenosine 5'-triphosphate), which is then used by the phage as a DNA polymerase substrate. In Vibrio cholerae serotype O1 (strain ATCC 39315 / El Tor Inaba N16961), this protein is Guanylate kinase (gmk).